Consider the following 706-residue polypeptide: Coiled-coil domain-containing protein 177 (706 aa).

The segment covering 1–11 (MVDPVPEEEKE) has biased composition (acidic residues). Disordered regions lie at residues 1–63 (MVDP…GGRR), 179–262 (ASAL…LREL), and 268–287 (ASAR…NPLG). 2 stretches are compositionally biased toward low complexity: residues 28–49 (PPDA…AAAP) and 179–209 (ASAL…RRTS). The segment covering 210–221 (PSPPARSRPPPA) has biased composition (pro residues). Low complexity predominate over residues 242–257 (ALSSESGASSSSYSGE). A Phosphoserine modification is found at serine 310. A coiled-coil region spans residues 360-624 (AAHGQWEQQR…QTRLEKERAQ (265 aa)). Disordered stretches follow at residues 364 to 386 (QWEQ…KQRA), 398 to 425 (VEER…RSEE), 448 to 580 (DDRL…EREH), and 651 to 706 (ERSE…LDRK). Basic and acidic residues predominate over residues 368–386 (QRVRAEQRREREEREKQRA). Composition is skewed to basic and acidic residues over residues 448–529 (DDRL…REGL), 548–580 (QEQR…EREH), and 651–663 (ERSE…RRSA). Residues 664 to 674 (LESARSTARAS) are compositionally biased toward low complexity. The span at 676-706 (HVREKVREETNTRSFDRMVREAQLHASLDRK) shows a compositional bias: basic and acidic residues.

The chain is Coiled-coil domain-containing protein 177 (Ccdc177) from Mus musculus (Mouse).